The following is a 486-amino-acid chain: Glutamyl-tRNA(Gln) amidotransferase subunit A (486 aa).

Active-site charge relay system residues include lysine 77 and serine 152. Serine 176 functions as the Acyl-ester intermediate in the catalytic mechanism.

Belongs to the amidase family. GatA subfamily. Heterotrimer of A, B and C subunits.

It catalyses the reaction L-glutamyl-tRNA(Gln) + L-glutamine + ATP + H2O = L-glutaminyl-tRNA(Gln) + L-glutamate + ADP + phosphate + H(+). In terms of biological role, allows the formation of correctly charged Gln-tRNA(Gln) through the transamidation of misacylated Glu-tRNA(Gln) in organisms which lack glutaminyl-tRNA synthetase. The reaction takes place in the presence of glutamine and ATP through an activated gamma-phospho-Glu-tRNA(Gln). The chain is Glutamyl-tRNA(Gln) amidotransferase subunit A from Lactococcus lactis subsp. cremoris (strain SK11).